A 1391-amino-acid polypeptide reads, in one-letter code: DNA-directed RNA polymerase subunit beta (1391 aa).

It belongs to the RNA polymerase beta chain family. In terms of assembly, the RNAP catalytic core consists of 2 alpha, 1 beta, 1 beta' and 1 omega subunit. When a sigma factor is associated with the core the holoenzyme is formed, which can initiate transcription.

The catalysed reaction is RNA(n) + a ribonucleoside 5'-triphosphate = RNA(n+1) + diphosphate. DNA-dependent RNA polymerase catalyzes the transcription of DNA into RNA using the four ribonucleoside triphosphates as substrates. This chain is DNA-directed RNA polymerase subunit beta, found in Granulibacter bethesdensis (strain ATCC BAA-1260 / CGDNIH1).